A 369-amino-acid chain; its full sequence is WAT1-related protein At3g53210 (369 aa).

The next 10 membrane-spanning stretches (helical) occupy residues 12–31 (IAMV…MRYA), 39–59 (LVFP…SAYF), 72–92 (FLIQ…GFYI), 103–123 (ASAT…LLGI), 133–153 (GIAK…ITLY), 182–202 (WTLG…WIVL), 214–234 (FSFV…ISAY), 252–272 (ALLY…IYVV), 278–298 (LFVS…ATLA), and 303–323 (FYLG…LVVM). 2 consecutive EamA domains span residues 24–150 (NHVI…SLVI) and 194–323 (LCWS…LVVM). The tract at residues 348 to 369 (GDEEDYHNNKPRSPISQPLISS) is disordered.

The protein belongs to the drug/metabolite transporter (DMT) superfamily. Plant drug/metabolite exporter (P-DME) (TC 2.A.7.4) family.

Its subcellular location is the membrane. The sequence is that of WAT1-related protein At3g53210 from Arabidopsis thaliana (Mouse-ear cress).